The following is a 151-amino-acid chain: 3-dehydroquinate dehydratase (151 aa).

Tyr-24 (proton acceptor) is an active-site residue. Residues Asn-76, His-82, and Asp-89 each contribute to the substrate site. Residue His-102 is the Proton donor of the active site. Substrate-binding positions include 103–104 and Arg-113; that span reads VS.

The protein belongs to the type-II 3-dehydroquinase family. As to quaternary structure, homododecamer.

It carries out the reaction 3-dehydroquinate = 3-dehydroshikimate + H2O. It functions in the pathway metabolic intermediate biosynthesis; chorismate biosynthesis; chorismate from D-erythrose 4-phosphate and phosphoenolpyruvate: step 3/7. Functionally, catalyzes a trans-dehydration via an enolate intermediate. This Rhodopseudomonas palustris (strain TIE-1) protein is 3-dehydroquinate dehydratase.